A 956-amino-acid chain; its full sequence is RNA-binding protein 44 (956 aa).

The segment at 301-321 (DNTQNNQNQSYNPTEENDHNV) is disordered. One can recognise an RRM domain in the interval 750 to 824 (SLLCITCLPG…HAVQVVHLSG (75 aa)). The tract at residues 831 to 855 (KPSDLSHSASESHKEDTAGDELRTK) is disordered. Residues 840–854 (SESHKEDTAGDELRT) show a composition bias toward basic and acidic residues.

It is found in the cytoplasm. Functionally, component of intercellular bridges during meiosis. Intercellular bridges are evolutionarily conserved structures that connect differentiating germ cells. Not required for fertility. The protein is RNA-binding protein 44 (rbm44) of Danio rerio (Zebrafish).